Consider the following 809-residue polypeptide: Ecotropic viral integration site 5 protein (809 aa).

Residues 1–483 (MVTTKMTAAF…EAESQCALKE (483 aa)) are interaction with alpha-tubulin, gamma-tubulin, BIRC5 and FBXO5. Disordered regions lie at residues 49–80 (VASPSASLHTTSSSTTLSTPTQSPSSPSKLSP) and 99–123 (DSKSLRSVNGSRRNSGSSLVSSSSA). Over residues 51 to 78 (SPSASLHTTSSSTTLSTPTQSPSSPSKL) the composition is skewed to low complexity. Residues S102 and S113 each carry the phosphoserine modification. Positions 103-123 (LRSVNGSRRNSGSSLVSSSSA) are enriched in low complexity. Residues 128-693 (SHLEEDSWIL…LNRSDSNQYI (566 aa)) are dimerization. Residues 163–348 (GIPHHFRAIV…RIFDIFMSEG (186 aa)) enclose the Rab-GAP TBC domain. Positions 377–809 (QHFQKVIPHQ…PQRESYSTTV (433 aa)) are targeting to the centrosomes. Residues 406 to 717 (KKMKKLEKEY…RCLKGQRDFS (312 aa)) are a coiled coil. The interaction with AURKB and INCENP stretch occupies residues 487 to 809 (KVLDIEKKNN…PQRESYSTTV (323 aa)). S497, S689, S776, and S778 each carry phosphoserine. The tract at residues 760–809 (HRKSGPMSLNPALADGSESEAEDGMLGPQESDPEAPQKQPPQRESYSTTV) is disordered. Positions 799 to 809 (PPQRESYSTTV) are enriched in polar residues.

As to quaternary structure, dimeric and monomeric. Interacts with alpha- and gamma-tubulin. Interacts with FBXO5. Interacts with the chromosome passenger complex (CPC) which is at least composed of AURKB/aurora-B, BIRC5/survivin, CDCA8/borealin and INCENP. In terms of processing, probably phosphorylated by PLK1; may be required for degradation during mitosis. Post-translationally, ubiquitinated. Degradation during prophase is ubiquitin-dependent. As to expression, widely expressed.

The protein localises to the nucleus. It localises to the cytoplasm. Its subcellular location is the cytoskeleton. It is found in the microtubule organizing center. The protein resides in the centrosome. The protein localises to the spindle. Functionally, functions as a regulator of cell cycle progression by stabilizing the FBXO5 protein and promoting cyclin-A accumulation during interphase. May play a role in cytokinesis. The protein is Ecotropic viral integration site 5 protein (Evi5) of Mus musculus (Mouse).